The sequence spans 393 residues: Protein TsgA (393 aa).

12 helical membrane-spanning segments follow: residues 11–31 (WISF…GMVM), 51–71 (FLNA…EIVP), 78–98 (FGFL…SLAL), 101–121 (AAMF…TFLV), 134–154 (LLFT…IAAF), 162–182 (WYWV…LTFG), 206–226 (IGVL…LGFI), 245–265 (TLVS…SFIL), 273–293 (ILTV…TGTP), 297–317 (AWSI…IITL), 332–352 (FVLT…GPIV), and 361–381 (LLTA…LGFV).

Belongs to the major facilitator superfamily. TsgA family.

It localises to the cell inner membrane. This Escherichia coli O139:H28 (strain E24377A / ETEC) protein is Protein TsgA.